Here is a 106-residue protein sequence, read N- to C-terminus: Putative membrane protein insertion efficiency factor (106 aa).

The protein belongs to the UPF0161 family.

The protein resides in the cell inner membrane. In terms of biological role, could be involved in insertion of integral membrane proteins into the membrane. The protein is Putative membrane protein insertion efficiency factor of Acinetobacter baumannii (strain SDF).